The sequence spans 75 residues: Protein EGO2 (75 aa).

In Saccharomyces cerevisiae (strain ATCC 204508 / S288c) (Baker's yeast), this protein is Protein EGO2.